Here is a 452-residue protein sequence, read N- to C-terminus: Probable glycine dehydrogenase (decarboxylating) subunit 1 (452 aa).

This sequence belongs to the GcvP family. N-terminal subunit subfamily. The glycine cleavage system is composed of four proteins: P, T, L and H. In this organism, the P 'protein' is a heterodimer of two subunits.

It catalyses the reaction N(6)-[(R)-lipoyl]-L-lysyl-[glycine-cleavage complex H protein] + glycine + H(+) = N(6)-[(R)-S(8)-aminomethyldihydrolipoyl]-L-lysyl-[glycine-cleavage complex H protein] + CO2. In terms of biological role, the glycine cleavage system catalyzes the degradation of glycine. The P protein binds the alpha-amino group of glycine through its pyridoxal phosphate cofactor; CO(2) is released and the remaining methylamine moiety is then transferred to the lipoamide cofactor of the H protein. This Nitrosospira multiformis (strain ATCC 25196 / NCIMB 11849 / C 71) protein is Probable glycine dehydrogenase (decarboxylating) subunit 1.